The primary structure comprises 1047 residues: Atrial natriuretic peptide receptor 2 (1047 aa).

The signal sequence occupies residues 1-16 (MALPSLLLVVAALAGG). Residues 17–458 (VRPPGARNLT…DKTPLSTLAI (442 aa)) are Extracellular-facing. Asparagine 24 and asparagine 35 each carry an N-linked (GlcNAc...) asparagine glycan. Cysteine 75 and cysteine 101 are joined by a disulfide. N-linked (GlcNAc...) asparagine glycosylation is found at asparagine 161, asparagine 195, asparagine 244, asparagine 277, and asparagine 349. The helical transmembrane segment at 459–478 (VALGTGITFIMFGVSSFLIF) threads the bilayer. Residues 479 to 1047 (RKLMLEKELA…GERKGPAGLL (569 aa)) are Cytoplasmic-facing. Serine 513 carries the post-translational modification Phosphoserine. In terms of domain architecture, Protein kinase spans 513–786 (SRLTLSLRGS…PDFGQIKGFI (274 aa)). Position 516 is a phosphothreonine (threonine 516). Residues serine 518, serine 522, serine 523, and serine 526 each carry the phosphoserine modification. A Phosphothreonine modification is found at threonine 529. The 131-residue stretch at 861–991 (TIYFSDIVGF…DTVNTASRME (131 aa)) folds into the Guanylate cyclase domain.

It belongs to the adenylyl cyclase class-4/guanylyl cyclase family. Post-translationally, phosphorylated. Phosphorylation of the protein kinase-like domain is required for full activation by CNP. In terms of processing, glycosylated.

Its subcellular location is the cell membrane. The catalysed reaction is GTP = 3',5'-cyclic GMP + diphosphate. Functionally, receptor for the C-type natriuretic peptide NPPC/CNP hormone. Has guanylate cyclase activity upon binding of its ligand. May play a role in the regulation of skeletal growth. The protein is Atrial natriuretic peptide receptor 2 (NPR2) of Bos taurus (Bovine).